Here is a 272-residue protein sequence, read N- to C-terminus: Undecaprenyl-diphosphatase (272 aa).

8 helical membrane-spanning segments follow: residues 4 to 24, 43 to 63, 86 to 106, 109 to 129, 145 to 165, 186 to 206, 222 to 242, and 249 to 269; these read FEVI…FLPI, GGRV…CWLY, ISVL…VDFI, VLFS…IIFW, ITFK…IPGT, TEFS…FDLI, VGFV…VLFV, and VFAW…MFFN.

Belongs to the UppP family.

Its subcellular location is the cell inner membrane. The enzyme catalyses di-trans,octa-cis-undecaprenyl diphosphate + H2O = di-trans,octa-cis-undecaprenyl phosphate + phosphate + H(+). In terms of biological role, catalyzes the dephosphorylation of undecaprenyl diphosphate (UPP). Confers resistance to bacitracin. The protein is Undecaprenyl-diphosphatase of Acinetobacter baumannii (strain SDF).